Consider the following 674-residue polypeptide: Endopolyphosphatase (674 aa).

At 1 to 21 the chain is on the cytoplasmic side; the sequence is MVVVGKSEVRNVSMSRPKKKS. 2 propeptides (removed in mature form) span residues 1-83 and 385-674; these read MVVV…VIIK and EQST…YKDD. Lys-6 participates in a covalent cross-link: Glycyl lysine isopeptide (Lys-Gly) (interchain with G-Cter in ubiquitin). Residues 22-42 form a helical; Signal-anchor for type II membrane protein membrane-spanning segment; the sequence is LIAILSTCVLFFLVFIIGAKF. Topologically, residues 43 to 674 are vacuolar; it reads QYVSVFSKFL…SFASSGYKDD (632 aa). N-linked (GlcNAc...) asparagine glycosylation is present at Asn-58. A disordered region spans residues 384–403; the sequence is MEQSTRVQQGEDSNEEDEET. N-linked (GlcNAc...) asparagine glycans are attached at residues Asn-505 and Asn-511.

It belongs to the endopolyphosphatase PPN1 family. Homotetramer. Interacts with PPN2. The cofactor is Mn(2+). Requires Mg(2+) as cofactor. Co(2+) is required as a cofactor. Zn(2+) serves as cofactor. In terms of processing, processing by proteases in the vacuole is required for activation. Ubiquitinated. Ubiquitination mediates sorting into internal vesicles in late endosomes. TUL1 and RSP5 are required for ubiquitination. Other cytoplasmic Lys residues than Lys-6 may also be ubiquitinated. Post-translationally, N-glycosylated. N-glycosylation is essential for the protease-mediated maturation.

It is found in the vacuole membrane. The protein resides in the cytoplasm. The catalysed reaction is [phosphate](n+1) + n H2O = (n+1) phosphate + n H(+). It catalyses the reaction [phosphate](n) + H2O = [phosphate](n-1) + phosphate + H(+). It carries out the reaction dATP + H2O = dADP + phosphate + H(+). Its activity is regulated as follows. Inhibited by heparin and EDTA. Functionally, catalyzes the hydrolysis of inorganic polyphosphate (polyP) chains of many hundreds of phosphate residues into shorter lengths. Has both exopolyphosphatase and endopolyphosphatase activities at different ratios depending on divalent cations by cleaving phosphate from the chain end and by fragmenting long-chain polymers into shorter ones, respectively. The limited digestion products are 1 and 3 P(i) residues. Also releases phosphate from dATP. dATP phosphohydrolase activity is about 7-fold lower than the exopolyphosphatase activity. The protein is Endopolyphosphatase of Saccharomyces cerevisiae (strain ATCC 204508 / S288c) (Baker's yeast).